The primary structure comprises 464 residues: 3-isopropylmalate dehydratase large subunit (464 aa).

Positions 337, 397, and 400 each coordinate [4Fe-4S] cluster.

This sequence belongs to the aconitase/IPM isomerase family. LeuC type 1 subfamily. Heterodimer of LeuC and LeuD. The cofactor is [4Fe-4S] cluster.

The catalysed reaction is (2R,3S)-3-isopropylmalate = (2S)-2-isopropylmalate. The protein operates within amino-acid biosynthesis; L-leucine biosynthesis; L-leucine from 3-methyl-2-oxobutanoate: step 2/4. In terms of biological role, catalyzes the isomerization between 2-isopropylmalate and 3-isopropylmalate, via the formation of 2-isopropylmaleate. The chain is 3-isopropylmalate dehydratase large subunit from Bacillus thuringiensis subsp. konkukian (strain 97-27).